The primary structure comprises 239 residues: Pyridoxine 5'-phosphate synthase (239 aa).

Asn-7 contacts 3-amino-2-oxopropyl phosphate. Asp-9–His-10 provides a ligand contact to 1-deoxy-D-xylulose 5-phosphate. Arg-18 lines the 3-amino-2-oxopropyl phosphate pocket. Catalysis depends on His-43, which acts as the Proton acceptor. 1-deoxy-D-xylulose 5-phosphate is bound by residues Arg-45 and His-50. Glu-70 acts as the Proton acceptor in catalysis. A 1-deoxy-D-xylulose 5-phosphate-binding site is contributed by Thr-100. His-191 acts as the Proton donor in catalysis. Residues Gly-192 and Gly-213–His-214 each bind 3-amino-2-oxopropyl phosphate.

This sequence belongs to the PNP synthase family. In terms of assembly, homooctamer; tetramer of dimers.

Its subcellular location is the cytoplasm. The enzyme catalyses 3-amino-2-oxopropyl phosphate + 1-deoxy-D-xylulose 5-phosphate = pyridoxine 5'-phosphate + phosphate + 2 H2O + H(+). Its pathway is cofactor biosynthesis; pyridoxine 5'-phosphate biosynthesis; pyridoxine 5'-phosphate from D-erythrose 4-phosphate: step 5/5. Catalyzes the complicated ring closure reaction between the two acyclic compounds 1-deoxy-D-xylulose-5-phosphate (DXP) and 3-amino-2-oxopropyl phosphate (1-amino-acetone-3-phosphate or AAP) to form pyridoxine 5'-phosphate (PNP) and inorganic phosphate. The sequence is that of Pyridoxine 5'-phosphate synthase from Geobacter sp. (strain M21).